The sequence spans 319 residues: MNKKKDSLFKTIKKNNIINVITTESFSKKIIKLNKPDWIKIKIPVDTFRIREIKSALRKNNLHSVCEEANCPNLPECFNRGTATFMILGSRCTRNCPFCAVSHGKPNSLNVEEPNNLAKTIFDMGIDYVVITSVVRDDLYDGGAQHFVNCIKSIRKKNKVKIEILVPDFRGRVELILKIFNSGLPDVFNHNVENVPRLYKKVRPGADYKKSLFLLESFKKKYSNIPTKSGLMLGLGEKDTEIIQVMKDLYSNGVTLLTVGQYLQPSINHIPVQRYIPLSEFKNIKKEALSIGFTNAFCGPFVRSSYHASFQANKLIKKI.

C66, C71, C77, C92, C96, C99, and S305 together coordinate [4Fe-4S] cluster. Positions 78 to 294 constitute a Radical SAM core domain; sequence FNRGTATFMI…KKEALSIGFT (217 aa).

Belongs to the radical SAM superfamily. Lipoyl synthase family. It depends on [4Fe-4S] cluster as a cofactor.

Its subcellular location is the cytoplasm. It carries out the reaction [[Fe-S] cluster scaffold protein carrying a second [4Fe-4S](2+) cluster] + N(6)-octanoyl-L-lysyl-[protein] + 2 oxidized [2Fe-2S]-[ferredoxin] + 2 S-adenosyl-L-methionine + 4 H(+) = [[Fe-S] cluster scaffold protein] + N(6)-[(R)-dihydrolipoyl]-L-lysyl-[protein] + 4 Fe(3+) + 2 hydrogen sulfide + 2 5'-deoxyadenosine + 2 L-methionine + 2 reduced [2Fe-2S]-[ferredoxin]. It functions in the pathway protein modification; protein lipoylation via endogenous pathway; protein N(6)-(lipoyl)lysine from octanoyl-[acyl-carrier-protein]: step 2/2. Catalyzes the radical-mediated insertion of two sulfur atoms into the C-6 and C-8 positions of the octanoyl moiety bound to the lipoyl domains of lipoate-dependent enzymes, thereby converting the octanoylated domains into lipoylated derivatives. The chain is Lipoyl synthase from Buchnera aphidicola subsp. Schizaphis graminum (strain Sg).